The chain runs to 280 residues: Para-Rep C2 (280 aa).

The CRESS-DNA virus Rep endonuclease domain maps to 1 to 97 (MARRYCFTLN…ETLISEIGIP (97 aa)). The RCR-1 signature appears at 6 to 9 (CFTL). A divalent metal cation is bound by residues Glu37 and His45. The short motif at 45 to 47 (HLQ) is the RCR-2 element. A Nuclear localization signal motif is present at residues 54–75 (NKIRLGGLKKKFGNRAHWEIAR). Tyr84 serves as the catalytic For DNA cleavage activity. The RCR-3 signature appears at 84–87 (YCCK). The Nuclear localization signal motif lies at 97 to 103 (PVMKGSN). 172 to 180 (GSDGGEGKT) is an ATP binding site.

This sequence belongs to the nanoviridea/circoviridae replication-associated protein family. As to quaternary structure, homooligomer (Potential). Rep binds to repeated DNA motifs (iterons). Requires Mg(2+) as cofactor. The cofactor is Mn(2+).

The protein resides in the host nucleus. It catalyses the reaction ATP + H2O = ADP + phosphate + H(+). Its function is as follows. Initiates and terminates the replication only of its own subviral DNA molecule. The closed circular ssDNA genome is first converted to a superhelical dsDNA. Rep binds a specific hairpin at the genome origin of replication. Introduces an endonucleolytic nick within the intergenic region of the genome, thereby initiating the rolling circle replication (RCR). Following cleavage, binds covalently to the 5'-phosphate of DNA as a tyrosyl ester. The cleavage gives rise to a free 3'-OH that serves as a primer for the cellular DNA polymerase. The polymerase synthesizes the (+) strand DNA by rolling circle mechanism. After one round of replication, a Rep-catalyzed nucleotidyl transfer reaction releases a circular single-stranded virus genome, thereby terminating the replication. Displays origin-specific DNA cleavage, nucleotidyl transferase, ATPase and helicase activities. This is Para-Rep C2 (C2) from Subterranean clover stunt C2 alphasatellite (SCSC2A).